We begin with the raw amino-acid sequence, 435 residues long: Glucoside xylosyltransferase 1 (435 aa).

Topologically, residues 1 to 6 (MRRYLR) are cytoplasmic. The helical; Signal-anchor for type II membrane protein transmembrane segment at 7-29 (VVGLCLACGFCSLLYAFSQLAVS) threads the bilayer. Over 30–435 (LEEGAAVGRR…NRYDTPPKER (406 aa)) the chain is Lumenal. N-linked (GlcNAc...) asparagine glycans are attached at residues Asn168 and Asn232.

This sequence belongs to the glycosyltransferase 8 family.

The protein localises to the membrane. The enzyme catalyses 3-O-(beta-D-glucosyl)-L-seryl-[EGF-like domain protein] + UDP-alpha-D-xylose = 3-O-[alpha-D-xylosyl-(1-&gt;3)-beta-D-glucosyl]-L-seryl-[EGF-like domain protein] + UDP + H(+). Glycosyltransferase which elongates the O-linked glucose attached to EGF-like repeats in the extracellular domain of Notch proteins by catalyzing the addition of xylose. This chain is Glucoside xylosyltransferase 1 (Gxylt1), found in Rattus norvegicus (Rat).